The following is a 742-amino-acid chain: Glycine--tRNA ligase (742 aa).

The WHEP-TRS domain maps to K73–F129. E309 serves as a coordination point for glycine. ATP is bound by residues R341–E343 and R352–V353. E360 contributes to the glycine binding site. Position 467 to 468 (E467 to C468) interacts with ATP. Residue E586–S588 participates in glycine binding. R593 contributes to the ATP binding site.

This sequence belongs to the class-II aminoacyl-tRNA synthetase family. Homodimer.

It is found in the cytoplasm. The protein localises to the cell projection. Its subcellular location is the axon. The protein resides in the secreted. It localises to the extracellular exosome. It catalyses the reaction tRNA(Gly) + glycine + ATP = glycyl-tRNA(Gly) + AMP + diphosphate. The catalysed reaction is 2 ATP + H(+) = P(1),P(4)-bis(5'-adenosyl) tetraphosphate + diphosphate. In terms of biological role, catalyzes the ATP-dependent ligation of glycine to the 3'-end of its cognate tRNA, via the formation of an aminoacyl-adenylate intermediate (Gly-AMP). Also produces diadenosine tetraphosphate (Ap4A), a universal pleiotropic signaling molecule needed for cell regulation pathways, by direct condensation of 2 ATPs. Thereby, may play a special role in Ap4A homeostasis. The polypeptide is Glycine--tRNA ligase (Caenorhabditis elegans).